The chain runs to 314 residues: tRNA-cytidine(32) 2-sulfurtransferase (314 aa).

A PP-loop motif motif is present at residues 58-63; it reads SGGKDS. [4Fe-4S] cluster-binding residues include Cys-133, Cys-136, and Cys-224.

It belongs to the TtcA family. Homodimer. Mg(2+) serves as cofactor. Requires [4Fe-4S] cluster as cofactor.

The protein localises to the cytoplasm. The enzyme catalyses cytidine(32) in tRNA + S-sulfanyl-L-cysteinyl-[cysteine desulfurase] + AH2 + ATP = 2-thiocytidine(32) in tRNA + L-cysteinyl-[cysteine desulfurase] + A + AMP + diphosphate + H(+). Its pathway is tRNA modification. Functionally, catalyzes the ATP-dependent 2-thiolation of cytidine in position 32 of tRNA, to form 2-thiocytidine (s(2)C32). The sulfur atoms are provided by the cysteine/cysteine desulfurase (IscS) system. This Polaromonas naphthalenivorans (strain CJ2) protein is tRNA-cytidine(32) 2-sulfurtransferase.